Consider the following 252-residue polypeptide: Imidazole glycerol phosphate synthase subunit HisF (252 aa).

Catalysis depends on residues Asp11 and Asp130.

The protein belongs to the HisA/HisF family. In terms of assembly, heterodimer of HisH and HisF.

Its subcellular location is the cytoplasm. The enzyme catalyses 5-[(5-phospho-1-deoxy-D-ribulos-1-ylimino)methylamino]-1-(5-phospho-beta-D-ribosyl)imidazole-4-carboxamide + L-glutamine = D-erythro-1-(imidazol-4-yl)glycerol 3-phosphate + 5-amino-1-(5-phospho-beta-D-ribosyl)imidazole-4-carboxamide + L-glutamate + H(+). It functions in the pathway amino-acid biosynthesis; L-histidine biosynthesis; L-histidine from 5-phospho-alpha-D-ribose 1-diphosphate: step 5/9. In terms of biological role, IGPS catalyzes the conversion of PRFAR and glutamine to IGP, AICAR and glutamate. The HisF subunit catalyzes the cyclization activity that produces IGP and AICAR from PRFAR using the ammonia provided by the HisH subunit. The polypeptide is Imidazole glycerol phosphate synthase subunit HisF (Staphylococcus epidermidis (strain ATCC 12228 / FDA PCI 1200)).